A 34-amino-acid chain; its full sequence is Trypsin inhibitor 1 (34 aa).

Residues 1–34 constitute a cross-link (cyclopeptide (Ser-Gly)); it reads SGSDGGVCPKILQRCRRDSDCPGACICRGNGYCG. Cystine bridges form between Cys-8–Cys-25, Cys-15–Cys-27, and Cys-21–Cys-33.

Post-translationally, this is a cyclic peptide.

It is found in the secreted. Its function is as follows. Inhibits trypsin; probably participates in a plant defense mechanism. In Momordica cochinchinensis (Spiny bitter cucumber), this protein is Trypsin inhibitor 1.